The following is a 257-amino-acid chain: MFKVRVIPCLDVKDGRVVKGVNFVDLRDAGDPVEAAIAYDAAGADELTFLDITATHENRGIMLDVVRRTAEACFMPVTVGGGVREVDDIKTLLRAGADKVSINSAAVSRREFVKEAAEKFGEQCVVVAIDAKRVKRPGGDRWEIFTHGGRNATGIDAIEYAQEVVSLGAGEILLTSMDRDGTRQGFDIPLTRAIADSIPVPVIASGGVGNLDHLVDGIRDGHATAVLAASIFHFGEFTVREAKEHMARRGLPMRLDA.

Active-site residues include Asp11 and Asp130.

Belongs to the HisA/HisF family. Heterodimer of HisH and HisF.

The protein resides in the cytoplasm. It catalyses the reaction 5-[(5-phospho-1-deoxy-D-ribulos-1-ylimino)methylamino]-1-(5-phospho-beta-D-ribosyl)imidazole-4-carboxamide + L-glutamine = D-erythro-1-(imidazol-4-yl)glycerol 3-phosphate + 5-amino-1-(5-phospho-beta-D-ribosyl)imidazole-4-carboxamide + L-glutamate + H(+). The protein operates within amino-acid biosynthesis; L-histidine biosynthesis; L-histidine from 5-phospho-alpha-D-ribose 1-diphosphate: step 5/9. Functionally, IGPS catalyzes the conversion of PRFAR and glutamine to IGP, AICAR and glutamate. The HisF subunit catalyzes the cyclization activity that produces IGP and AICAR from PRFAR using the ammonia provided by the HisH subunit. This is Imidazole glycerol phosphate synthase subunit HisF from Bradyrhizobium diazoefficiens (strain JCM 10833 / BCRC 13528 / IAM 13628 / NBRC 14792 / USDA 110).